A 275-amino-acid polypeptide reads, in one-letter code: uncharacterized protein (275 aa).

Glutamate 71, aspartate 85, isoleucine 87, and aspartate 88 together coordinate Mg(2+). Glutamate 71 contacts substrate. 87 to 90 (IDGT) contributes to the substrate binding site. 3 helical membrane-spanning segments follow: residues 87-107 (IDGT…IAFV), 112-132 (PVLG…SVDG), and 178-198 (IVCL…RLAG). Position 208 (aspartate 208) interacts with Mg(2+). Residue aspartate 208 participates in substrate binding.

Belongs to the inositol monophosphatase superfamily.

The protein resides in the cell membrane. This is an uncharacterized protein from Sinorhizobium fredii (strain NBRC 101917 / NGR234).